The following is a 902-amino-acid chain: Cysteine-tryptophan domain-containing zinc finger protein 3 (902 aa).

Residues 21–74 form a CW-type zinc finger; it reads VLIEDNWVCCDMCHKWRLLPYGTNTSMLPKKWICSMLDWLPGMNKCDISEDETT. Zn(2+) is bound by residues Cys-30, Cys-33, Cys-54, and Cys-66. Disordered regions lie at residues 131–233, 326–345, 420–480, and 537–651; these read EHDQ…EDRH, EDNR…NENL, QSST…LNAD, and HGPT…SASP. Composition is skewed to basic and acidic residues over residues 151-169 and 193-203; these read KNRE…DPVS and SHSDGGDLTEK. Residues 204–213 are compositionally biased toward basic residues; the sequence is SKKHSKSKNR. 2 stretches are compositionally biased toward basic and acidic residues: residues 214–233 and 335–345; these read RGID…EDRH and HTSKGGDNENL. Positions 421–433 are enriched in low complexity; the sequence is SSTVATSSSSKVS. Composition is skewed to polar residues over residues 450–463, 564–588, and 599–611; these read ESVS…SNTD, NSAP…QIEM, and IDNQ…IGQD. Positions 612-625 are enriched in basic and acidic residues; that stretch reads NHSHMKEGKSEVHT. Residues 634 to 648 show a composition bias toward polar residues; the sequence is KNHTQLRSNVENGDS.

As to expression, expressed in leaf sheaths, flag leaves, nodes, internodes and panicles.

Its subcellular location is the nucleus. Its function is as follows. Binds to histones H3K4me1, H3K4me2 and H3K4me3 in GST pull-down assay. May facilitate the recruitment of effectors to mediate gene expression. The protein is Cysteine-tryptophan domain-containing zinc finger protein 3 of Oryza sativa subsp. japonica (Rice).